The primary structure comprises 570 residues: MSRLEAKKPSLCKSEPLTTERVRTTLSVLKRIVTSCYGPSGRLKQLHNGFGGYVCTTSQSSALLSHLLVTHPILKILTASIQNHVSSFSDCGLFTAILCCNLIENVQRLGLTPTTVIRLNKHLLSLCISYLKSETCGCRIPVDFSSTQILLCLVRSILTSKPACMLTRKETEHVSALILRAFLLTIPENAEGHIILGKSLIVPLKGQRVIDSTVLPGILIEMSEVQLMRLLPIKKSTALKVALFCTTLSGDTSDTGEGTVVVSYGVSLENAVLDQLLNLGRQLISDHVDLVLCQKVIHPSLKQFLNMHRIIAIDRIGVTLMEPLTKMTGTQPIGSLGSICPNSYGSVKDVCTAKFGSKHFFHLIPNEATICSLLLCNRNDTAWDELKLTCQTALHVLQLTLKEPWALLGGGCTETHLAAYIRHKTHNDPESILKDDECTQTELQLIAEAFCSALESVVGSLEHDGGEILTDMKYGHLWSVQADSPCVANWPDLLSQCGCGLYNSQEELNWSFLRSTRRPFVPQSCLPHEAVGSASNLTLDCLTAKLSGLQVAVETANLILDLSYVIEDKN.

Position 192–199 (Gly-192–Ser-199) interacts with ATP. The tract at residues Lys-198–Ile-370 is substrate-binding apical domain.

The protein belongs to the TCP-1 chaperonin family. In terms of assembly, component of a complex composed at least of MKKS, BBS10, BBS12, TCP1, CCT2, CCT3, CCT4, CCT5 and CCT8. Interacts with STUB1. Interacts with BBS2 (via coiled coil domain). Interacts with CCDC28B. Interacts with BBS12. Interacts with SMARCC1, a component of the SWI/SNF complexes; the interaction takes place predominantly in the cytoplasm and may modulate SMARCC1 location. Interacts with DLEC1. As to expression, widely expressed in adult and fetal tissues.

Its subcellular location is the cytoplasm. The protein localises to the cytoskeleton. The protein resides in the microtubule organizing center. It localises to the centrosome. It is found in the cytosol. Its subcellular location is the nucleus. Its function is as follows. Probable molecular chaperone that assists the folding of proteins upon ATP hydrolysis. Plays a role in the assembly of BBSome, a complex involved in ciliogenesis regulating transports vesicles to the cilia. May play a role in protein processing in limb, cardiac and reproductive system development. May play a role in cytokinesis. This is Molecular chaperone MKKS from Homo sapiens (Human).